The primary structure comprises 170 residues: Putative pre-16S rRNA nuclease (170 aa).

Residues 1–25 are disordered; the sequence is MVPAQHRPPDRPGDPAHDPGRGRRL. Residues 7-21 are compositionally biased toward basic and acidic residues; sequence RPPDRPGDPAHDPGR.

It belongs to the YqgF nuclease family.

Its subcellular location is the cytoplasm. In terms of biological role, could be a nuclease involved in processing of the 5'-end of pre-16S rRNA. The protein is Putative pre-16S rRNA nuclease of Mycobacterium tuberculosis (strain ATCC 25177 / H37Ra).